The primary structure comprises 156 residues: Putative NrdI-like protein (156 aa).

This chain is Putative NrdI-like protein, found in Streptococcus pneumoniae (strain ATCC BAA-255 / R6).